A 449-amino-acid polypeptide reads, in one-letter code: Gamma conglutin 1 (449 aa).

A signal peptide spans M1 to L33. A Peptidase A1 domain is found at H60 to N429. Cystine bridges form between C88–C178, C102–C115, C107–C133, C118–C128, and C350–C391. N-linked (GlcNAc...) asparagine glycosylation is present at N130.

The protein belongs to the peptidase A1 family. As to quaternary structure, two-subunit monomeric unit made of alpha and beta subunits coupled by disulfide bonds (at pH 4.5 and under non-reducing conditions). Can also form oligomers including dimer, tetramer and cyclic hexamer (trimer of dimers) (at pH &gt; 5.5). Component of globulins complexes which accumulate in seeds. Interacts with flavonoids (e.g. apigenin glucosides) present in globulins complexes. Forms a static complex with vitexin. Undergoes very complex post-translational maturation; the proteolytic processing leading to the formation of two alpha and beta subunits is incomplete, leaving a certain amount of the protein in an uncut form. Post-translationally, glycosylated on alpha chain. Expressed in developing cotyledons and in the embryonic axis of germinating seeds. Accumulates in seeds, especially in the protein bodies of developing cotyledonary cells (at protein level). Also detected, at low levels, in plumules and radicles.

It is found in the secreted. The protein localises to the extracellular space. Its function is as follows. Sulfur-rich seed storage protein that remains undegraded at germination. This is Gamma conglutin 1 from Lupinus angustifolius (Narrow-leaved blue lupine).